A 203-amino-acid polypeptide reads, in one-letter code: Outer-membrane lipoprotein LolB (203 aa).

The first 18 residues, 1 to 18, serve as a signal peptide directing secretion; the sequence is MTLRSFLIFFLSSLILAG. Cys19 carries N-palmitoyl cysteine lipidation. Cys19 carries S-diacylglycerol cysteine lipidation.

Belongs to the LolB family. As to quaternary structure, monomer.

The protein resides in the cell outer membrane. In terms of biological role, plays a critical role in the incorporation of lipoproteins in the outer membrane after they are released by the LolA protein. This chain is Outer-membrane lipoprotein LolB, found in Vibrio parahaemolyticus serotype O3:K6 (strain RIMD 2210633).